Here is a 156-residue protein sequence, read N- to C-terminus: Cyclic pyranopterin monophosphate synthase (156 aa).

Substrate is bound by residues 73–75 (LCH) and 110–111 (ME). Aspartate 125 is an active-site residue.

Belongs to the MoaC family. In terms of assembly, homohexamer; trimer of dimers.

It carries out the reaction (8S)-3',8-cyclo-7,8-dihydroguanosine 5'-triphosphate = cyclic pyranopterin phosphate + diphosphate. The protein operates within cofactor biosynthesis; molybdopterin biosynthesis. Functionally, catalyzes the conversion of (8S)-3',8-cyclo-7,8-dihydroguanosine 5'-triphosphate to cyclic pyranopterin monophosphate (cPMP). This chain is Cyclic pyranopterin monophosphate synthase, found in Pseudomonas putida (strain W619).